Here is a 414-residue protein sequence, read N- to C-terminus: Serine hydroxymethyltransferase (414 aa).

(6S)-5,6,7,8-tetrahydrofolate-binding positions include Leu-118 and 122–124 (GHL). Lys-227 is modified (N6-(pyridoxal phosphate)lysine). (6S)-5,6,7,8-tetrahydrofolate contacts are provided by residues Glu-240 and 350-352 (SPF).

This sequence belongs to the SHMT family. As to quaternary structure, homodimer. Pyridoxal 5'-phosphate is required as a cofactor.

Its subcellular location is the cytoplasm. It catalyses the reaction (6R)-5,10-methylene-5,6,7,8-tetrahydrofolate + glycine + H2O = (6S)-5,6,7,8-tetrahydrofolate + L-serine. It functions in the pathway one-carbon metabolism; tetrahydrofolate interconversion. The protein operates within amino-acid biosynthesis; glycine biosynthesis; glycine from L-serine: step 1/1. Catalyzes the reversible interconversion of serine and glycine with tetrahydrofolate (THF) serving as the one-carbon carrier. This reaction serves as the major source of one-carbon groups required for the biosynthesis of purines, thymidylate, methionine, and other important biomolecules. Also exhibits THF-independent aldolase activity toward beta-hydroxyamino acids, producing glycine and aldehydes, via a retro-aldol mechanism. The chain is Serine hydroxymethyltransferase from Bacillus thuringiensis (strain Al Hakam).